We begin with the raw amino-acid sequence, 572 residues long: uncharacterized protein (572 aa).

Residues 13-45 (ALIAKPKGKTVSGDGADPKKRGRPKKNATEPAV) form a disordered region. The stretch at 177–204 (VLTKEMEEKLEALDRDMRTAEETKVSIA) forms a coiled coil.

This is an uncharacterized protein from Dryophytes versicolor (chameleon treefrog).